Reading from the N-terminus, the 194-residue chain is MRKAERARTTNETDIKLAFEIDGEGKADISTDVPFMTHMLDLFTKHGQFNLTVDAKGDTEIDDHHTTEDIGICLGQAFLEALGDKKGIKRYGSALVPMDEALAQVAVDLSNRPHLEMRAAFPQAKVGTFDTELVHEFLWKLALEARMNLHVIVHYGTNTHHMIEAVFKALGRALDEASSIDPRVKGVPSTKGML.

It belongs to the imidazoleglycerol-phosphate dehydratase family.

The protein resides in the cytoplasm. It catalyses the reaction D-erythro-1-(imidazol-4-yl)glycerol 3-phosphate = 3-(imidazol-4-yl)-2-oxopropyl phosphate + H2O. It functions in the pathway amino-acid biosynthesis; L-histidine biosynthesis; L-histidine from 5-phospho-alpha-D-ribose 1-diphosphate: step 6/9. This is Imidazoleglycerol-phosphate dehydratase from Bacillus velezensis (strain DSM 23117 / BGSC 10A6 / LMG 26770 / FZB42) (Bacillus amyloliquefaciens subsp. plantarum).